The primary structure comprises 183 residues: MDIDPYKEFGATVELLSFLPSDFFPSVRDLLDTAAALYREALESPEHCSPHHTALRQAILCWVELMTLATWVGNNLEDPASRDLVVNYVNTNMGLKIRQLLWFHISCLTFGRETVLEYLVSFGVWIGTPPAYRPPNAPILSTLPETTVVRRRGRSPRRRTPSPRRRRSQSPRRRRSQSRESQC.

Residues 136-183 (NAPILSTLPETTVVRRRGRSPRRRTPSPRRRRSQSPRRRRSQSRESQC) form a disordered region. The segment covering 149 to 176 (VRRRGRSPRRRTPSPRRRRSQSPRRRRS) has biased composition (basic residues). A phosphoserine; by host mark is found at serine 155, serine 162, and serine 170. One copy of the 1; half-length repeat lies at 155-161 (SPRRRTP). Positions 155 to 177 (SPRRRTPSPRRRRSQSPRRRRSQ) are 3 X 8 AA repeats of S-P-R-R-R-[PR]-S-Q. The short motif at 158 to 175 (RRTPSPRRRRSQSPRRRR) is the Bipartite nuclear localization signal element. 2 tandem repeats follow at residues 162-169 (SPRRRRSQ) and 170-177 (SPRRRRSQ). The tract at residues 177 to 183 (QSRESQC) is RNA binding.

This sequence belongs to the orthohepadnavirus core antigen family. Homodimerizes, then multimerizes. Interacts with cytosol exposed regions of viral L glycoprotein present in the reticulum-to-Golgi compartment. Interacts with human FLNB. Phosphorylated form interacts with host importin alpha; this interaction depends on the exposure of the NLS, which itself depends upon genome maturation and/or phosphorylation of the capsid protein. Interacts with host NUP153. Post-translationally, phosphorylated by host SRPK1, SRPK2, and maybe protein kinase C or GAPDH. Phosphorylation is critical for pregenomic RNA packaging. Protein kinase C phosphorylation is stimulated by HBx protein and may play a role in transport of the viral genome to the nucleus at the late step during the viral replication cycle.

The protein localises to the virion. It localises to the host cytoplasm. Its function is as follows. Self assembles to form an icosahedral capsid. Most capsids appear to be large particles with an icosahedral symmetry of T=4 and consist of 240 copies of capsid protein, though a fraction forms smaller T=3 particles consisting of 180 capsid proteins. Entering capsids are transported along microtubules to the nucleus. Phosphorylation of the capsid is thought to induce exposure of nuclear localization signal in the C-terminal portion of the capsid protein that allows binding to the nuclear pore complex via the importin (karyopherin-) alpha and beta. Capsids are imported in intact form through the nuclear pore into the nuclear basket, where it probably binds NUP153. Only capsids that contain the mature viral genome can release the viral DNA and capsid protein into the nucleoplasm. Immature capsids get stuck in the basket. Capsids encapsulate the pre-genomic RNA and the P protein. Pre-genomic RNA is reverse-transcribed into DNA while the capsid is still in the cytoplasm. The capsid can then either be directed to the nucleus, providing more genomes for transcription, or bud through the endoplasmic reticulum to provide new virions. This Homo sapiens (Human) protein is Capsid protein.